Here is a 721-residue protein sequence, read N- to C-terminus: Fatty acid oxidation complex subunit alpha (721 aa).

The enoyl-CoA hydratase/isomerase stretch occupies residues 1 to 190; sequence MIYEGKAITV…KVGVVDAIVA (190 aa). Residue D297 coordinates substrate. The segment at 312–721 is 3-hydroxyacyl-CoA dehydrogenase; the sequence is RDVKQAAVLG…SFFGQASSEV (410 aa). Residues M325, D344, 401 to 403, K408, and S430 each bind NAD(+); that span reads VVE. H451 (for 3-hydroxyacyl-CoA dehydrogenase activity) is an active-site residue. N454 lines the NAD(+) pocket. Substrate-binding residues include N501 and Y660.

In the N-terminal section; belongs to the enoyl-CoA hydratase/isomerase family. The protein in the C-terminal section; belongs to the 3-hydroxyacyl-CoA dehydrogenase family. Heterotetramer of two alpha chains (FadB) and two beta chains (FadA).

It carries out the reaction a (3S)-3-hydroxyacyl-CoA + NAD(+) = a 3-oxoacyl-CoA + NADH + H(+). The enzyme catalyses a (3S)-3-hydroxyacyl-CoA = a (2E)-enoyl-CoA + H2O. The catalysed reaction is a 4-saturated-(3S)-3-hydroxyacyl-CoA = a (3E)-enoyl-CoA + H2O. It catalyses the reaction (3S)-3-hydroxybutanoyl-CoA = (3R)-3-hydroxybutanoyl-CoA. It carries out the reaction a (3Z)-enoyl-CoA = a 4-saturated (2E)-enoyl-CoA. The enzyme catalyses a (3E)-enoyl-CoA = a 4-saturated (2E)-enoyl-CoA. It participates in lipid metabolism; fatty acid beta-oxidation. Functionally, involved in the aerobic and anaerobic degradation of long-chain fatty acids via beta-oxidation cycle. Catalyzes the formation of 3-oxoacyl-CoA from enoyl-CoA via L-3-hydroxyacyl-CoA. It can also use D-3-hydroxyacyl-CoA and cis-3-enoyl-CoA as substrate. The polypeptide is Fatty acid oxidation complex subunit alpha (Pseudomonas syringae pv. tomato (strain ATCC BAA-871 / DC3000)).